Here is a 65-residue protein sequence, read N- to C-terminus: Large ribosomal subunit protein bL35 (65 aa).

This sequence belongs to the bacterial ribosomal protein bL35 family.

This chain is Large ribosomal subunit protein bL35, found in Erwinia tasmaniensis (strain DSM 17950 / CFBP 7177 / CIP 109463 / NCPPB 4357 / Et1/99).